The chain runs to 361 residues: AT-hook motif nuclear-localized protein 12 (361 aa).

2 disordered regions span residues 29–143 (SQVA…GRKQ) and 286–361 (NNKT…LTRG). Positions 48-59 (SNPNIHHPQANN) are enriched in polar residues. Over residues 85-95 (QPPPPPPPPEE) the composition is skewed to pro residues. Residues 99–107 (KRKRGRPRK) carry the Bipartite nuclear localization signal motif. DNA-binding regions (a.T hook) lie at residues 99 to 111 (KRKRGRPRKYGEP) and 130 to 142 (KRARGRPPGTGRK). One can recognise a PPC domain in the interval 154 to 297 (TSAGLAFAPH…KTIRQEKEPN (144 aa)). The span at 306–322 (ETTPGSAAEPAASAGQQ) shows a compositional bias: low complexity.

As to quaternary structure, homodimer. Interacts with AHL27, AHL29 and ATAF2/NAC081.

The protein localises to the nucleus. In terms of biological role, transcription factor that specifically binds AT-rich DNA sequences related to the nuclear matrix attachment regions (MARs). The protein is AT-hook motif nuclear-localized protein 12 of Arabidopsis thaliana (Mouse-ear cress).